A 216-amino-acid chain; its full sequence is Ribosomal RNA large subunit methyltransferase E (216 aa).

Residues Gly-67, Trp-69, Asp-87, Asp-103, and Asp-128 each coordinate S-adenosyl-L-methionine. The Proton acceptor role is filled by Lys-168.

The protein belongs to the class I-like SAM-binding methyltransferase superfamily. RNA methyltransferase RlmE family.

The protein resides in the cytoplasm. It carries out the reaction uridine(2552) in 23S rRNA + S-adenosyl-L-methionine = 2'-O-methyluridine(2552) in 23S rRNA + S-adenosyl-L-homocysteine + H(+). Its function is as follows. Specifically methylates the uridine in position 2552 of 23S rRNA at the 2'-O position of the ribose in the fully assembled 50S ribosomal subunit. The polypeptide is Ribosomal RNA large subunit methyltransferase E (Acinetobacter baylyi (strain ATCC 33305 / BD413 / ADP1)).